The primary structure comprises 461 residues: L-seryl-tRNA(Sec) selenium transferase (461 aa).

Residue K291 is modified to N6-(pyridoxal phosphate)lysine.

The protein belongs to the SelA family. It depends on pyridoxal 5'-phosphate as a cofactor.

It localises to the cytoplasm. The enzyme catalyses L-seryl-tRNA(Sec) + selenophosphate + H(+) = L-selenocysteinyl-tRNA(Sec) + phosphate. It functions in the pathway aminoacyl-tRNA biosynthesis; selenocysteinyl-tRNA(Sec) biosynthesis; selenocysteinyl-tRNA(Sec) from L-seryl-tRNA(Sec) (bacterial route): step 1/1. In terms of biological role, converts seryl-tRNA(Sec) to selenocysteinyl-tRNA(Sec) required for selenoprotein biosynthesis. The chain is L-seryl-tRNA(Sec) selenium transferase from Caldanaerobacter subterraneus subsp. tengcongensis (strain DSM 15242 / JCM 11007 / NBRC 100824 / MB4) (Thermoanaerobacter tengcongensis).